Consider the following 216-residue polypeptide: UPF0502 protein VPA1223 (216 aa).

It belongs to the UPF0502 family.

The protein is UPF0502 protein VPA1223 of Vibrio parahaemolyticus serotype O3:K6 (strain RIMD 2210633).